A 444-amino-acid polypeptide reads, in one-letter code: Trigger factor (444 aa).

The 86-residue stretch at 160–245 folds into the PPIase FKBP-type domain; sequence DMQVTFDFEG…VKQVEKPKLP (86 aa).

This sequence belongs to the FKBP-type PPIase family. Tig subfamily.

Its subcellular location is the cytoplasm. The catalysed reaction is [protein]-peptidylproline (omega=180) = [protein]-peptidylproline (omega=0). Functionally, involved in protein export. Acts as a chaperone by maintaining the newly synthesized protein in an open conformation. Functions as a peptidyl-prolyl cis-trans isomerase. The polypeptide is Trigger factor (Acinetobacter baumannii (strain SDF)).